We begin with the raw amino-acid sequence, 313 residues long: Olfactory receptor 4M1 (313 aa).

The Extracellular portion of the chain corresponds to 1-25 (METANYTKVTEFVLTGLSQTREVQL). N5 carries an N-linked (GlcNAc...) asparagine glycan. The chain crosses the membrane as a helical span at residues 26-49 (VLFVIFLSFYLFILPGNILIICTI). Residues 50–57 (RLDPHLTS) lie on the Cytoplasmic side of the membrane. A helical transmembrane segment spans residues 58-79 (PMYFLLANLALLDIWYSSITAP). Residues 80–100 (KMLIDFFVERKIISFGGCIAQ) are Extracellular-facing. A disulfide bridge connects residues C97 and C189. Residues 101 to 120 (LFFLHFVGASEMFLLTVMAY) traverse the membrane as a helical segment. At 121 to 139 (DRYAAICRPLHYATIMNRR) the chain is on the cytoplasmic side. The helical transmembrane segment at 140–158 (LCCILVALSWMGGFIHSII) threads the bilayer. Over 159-195 (QVALIVRLPFCGPNELDSYFCDITQVVRIACANTFPE) the chain is Extracellular. Residues 196–219 (ELVMICSSGLISVVCFIALLMSYA) traverse the membrane as a helical segment. Residues 220 to 237 (FLLALLKKHSGSGENTNR) lie on the Cytoplasmic side of the membrane. A helical transmembrane segment spans residues 238 to 260 (AMSTCYSHITIVVLMFGPSIYIY). At 261-271 (ARPFDSFSLDK) the chain is on the extracellular side. A helical transmembrane segment spans residues 272 to 291 (VVSVFHTVIFPLLNPIIYTL). Residues 292-313 (RNKEVKAAMRKVVTKYILCEEK) are Cytoplasmic-facing.

It belongs to the G-protein coupled receptor 1 family. Highly expressed in the testis and olfactory bulb.

The protein localises to the cell membrane. Its function is as follows. Olfactory receptor that acts as a receptor of Asprosin hormone, potentially at the surface of hepatocytes and may help to promote hepatocyte glucose release. The sequence is that of Olfactory receptor 4M1 from Homo sapiens (Human).